Reading from the N-terminus, the 412-residue chain is Serine hydroxymethyltransferase (412 aa).

Residues Leu117 and 121-123 (GHL) each bind (6S)-5,6,7,8-tetrahydrofolate. Lys226 carries the post-translational modification N6-(pyridoxal phosphate)lysine.

The protein belongs to the SHMT family. Homodimer. Pyridoxal 5'-phosphate serves as cofactor.

The protein localises to the cytoplasm. The catalysed reaction is (6R)-5,10-methylene-5,6,7,8-tetrahydrofolate + glycine + H2O = (6S)-5,6,7,8-tetrahydrofolate + L-serine. It participates in one-carbon metabolism; tetrahydrofolate interconversion. The protein operates within amino-acid biosynthesis; glycine biosynthesis; glycine from L-serine: step 1/1. Functionally, catalyzes the reversible interconversion of serine and glycine with tetrahydrofolate (THF) serving as the one-carbon carrier. This reaction serves as the major source of one-carbon groups required for the biosynthesis of purines, thymidylate, methionine, and other important biomolecules. Also exhibits THF-independent aldolase activity toward beta-hydroxyamino acids, producing glycine and aldehydes, via a retro-aldol mechanism. The protein is Serine hydroxymethyltransferase of Staphylococcus epidermidis (strain ATCC 35984 / DSM 28319 / BCRC 17069 / CCUG 31568 / BM 3577 / RP62A).